The following is a 629-amino-acid chain: Arginyl-tRNA--protein transferase 1 (629 aa).

Disordered regions lie at residues 274–298 (QNNS…TNEP) and 353–405 (PDES…ITKE). Residues 282 to 295 (TTTATTATTTTTTT) show a composition bias toward low complexity. The span at 356-396 (SYDDYVYDGKDDDDDDDDKDEKEDDEDEDQEDDEDEDDGNN) shows a compositional bias: acidic residues.

It belongs to the R-transferase family.

The catalysed reaction is an N-terminal L-alpha-aminoacyl-[protein] + L-arginyl-tRNA(Arg) = an N-terminal L-arginyl-L-aminoacyl-[protein] + tRNA(Arg) + H(+). Functionally, involved in the post-translational conjugation of arginine to the N-terminal aspartate or glutamate of a protein. This arginylation is required for degradation of the protein via the ubiquitin pathway. Does not arginylate cysteine residues. The sequence is that of Arginyl-tRNA--protein transferase 1 (ate1) from Dictyostelium discoideum (Social amoeba).